The sequence spans 115 residues: NADH-ubiquinone oxidoreductase chain 3 (115 aa).

3 consecutive transmembrane segments (helical) span residues 3–23 (FALILMTNTLLALLLMIITFW), 55–75 (FFLVAITFLLFDLEIALLLPL), and 84–104 (LPLMVMSSLLLIIILTLSLAY).

Belongs to the complex I subunit 3 family. In terms of assembly, core subunit of respiratory chain NADH dehydrogenase (Complex I) which is composed of 45 different subunits. Interacts with TMEM186. Interacts with TMEM242.

The protein localises to the mitochondrion inner membrane. The enzyme catalyses a ubiquinone + NADH + 5 H(+)(in) = a ubiquinol + NAD(+) + 4 H(+)(out). In terms of biological role, core subunit of the mitochondrial membrane respiratory chain NADH dehydrogenase (Complex I) which catalyzes electron transfer from NADH through the respiratory chain, using ubiquinone as an electron acceptor. Essential for the catalytic activity of complex I. The sequence is that of NADH-ubiquinone oxidoreductase chain 3 from Gorilla gorilla gorilla (Western lowland gorilla).